The following is a 177-amino-acid chain: MSELTTIARPYAKAAFDFAIEQSAVEKWTEMLGFAAAVAEDETVKAYLSSSLSAQKLADTVISICGEQLDQYGQNLIRLMAENKRLSAIPAVFEEFKHHVEEHQAIAEVEVTSAQPLNATQIEKIAAAMEKRLARKVKLNCNVDNALIAGVIVRTEDFVIDGSSRGQLTRLANELQL.

Belongs to the ATPase delta chain family. In terms of assembly, F-type ATPases have 2 components, F(1) - the catalytic core - and F(0) - the membrane proton channel. F(1) has five subunits: alpha(3), beta(3), gamma(1), delta(1), epsilon(1). F(0) has three main subunits: a(1), b(2) and c(10-14). The alpha and beta chains form an alternating ring which encloses part of the gamma chain. F(1) is attached to F(0) by a central stalk formed by the gamma and epsilon chains, while a peripheral stalk is formed by the delta and b chains.

The protein localises to the cell inner membrane. In terms of biological role, f(1)F(0) ATP synthase produces ATP from ADP in the presence of a proton or sodium gradient. F-type ATPases consist of two structural domains, F(1) containing the extramembraneous catalytic core and F(0) containing the membrane proton channel, linked together by a central stalk and a peripheral stalk. During catalysis, ATP synthesis in the catalytic domain of F(1) is coupled via a rotary mechanism of the central stalk subunits to proton translocation. Functionally, this protein is part of the stalk that links CF(0) to CF(1). It either transmits conformational changes from CF(0) to CF(1) or is implicated in proton conduction. This chain is ATP synthase subunit delta, found in Haemophilus influenzae (strain PittGG).